We begin with the raw amino-acid sequence, 406 residues long: Imidazolonepropionase (406 aa).

His-65 and His-67 together coordinate Fe(3+). The Zn(2+) site is built by His-65 and His-67. Positions 74, 137, and 170 each coordinate 4-imidazolone-5-propanoate. Residue Tyr-137 coordinates N-formimidoyl-L-glutamate. His-235 contacts Fe(3+). Position 235 (His-235) interacts with Zn(2+). Gln-238 contributes to the 4-imidazolone-5-propanoate binding site. Asp-310 lines the Fe(3+) pocket. Asp-310 contacts Zn(2+). Residues Asn-312 and Gly-314 each contribute to the N-formimidoyl-L-glutamate site. Position 315 (Thr-315) interacts with 4-imidazolone-5-propanoate.

It belongs to the metallo-dependent hydrolases superfamily. HutI family. The cofactor is Zn(2+). It depends on Fe(3+) as a cofactor.

The protein localises to the cytoplasm. The catalysed reaction is 4-imidazolone-5-propanoate + H2O = N-formimidoyl-L-glutamate. It participates in amino-acid degradation; L-histidine degradation into L-glutamate; N-formimidoyl-L-glutamate from L-histidine: step 3/3. In terms of biological role, catalyzes the hydrolytic cleavage of the carbon-nitrogen bond in imidazolone-5-propanoate to yield N-formimidoyl-L-glutamate. It is the third step in the universal histidine degradation pathway. This Vibrio vulnificus (strain CMCP6) protein is Imidazolonepropionase.